Consider the following 334-residue polypeptide: RNA 3'-terminal phosphate cyclase (334 aa).

ATP is bound at residue 279–282 (HMGD). His303 (tele-AMP-histidine intermediate) is an active-site residue.

This sequence belongs to the RNA 3'-terminal cyclase family. Type 1 subfamily.

It is found in the cytoplasm. The enzyme catalyses a 3'-end 3'-phospho-ribonucleotide-RNA + ATP = a 3'-end 2',3'-cyclophospho-ribonucleotide-RNA + AMP + diphosphate. Functionally, catalyzes the conversion of 3'-phosphate to a 2',3'-cyclic phosphodiester at the end of RNA. The mechanism of action of the enzyme occurs in 3 steps: (A) adenylation of the enzyme by ATP; (B) transfer of adenylate to an RNA-N3'P to produce RNA-N3'PP5'A; (C) and attack of the adjacent 2'-hydroxyl on the 3'-phosphorus in the diester linkage to produce the cyclic end product. The biological role of this enzyme is unknown but it is likely to function in some aspects of cellular RNA processing. The chain is RNA 3'-terminal phosphate cyclase from Metallosphaera sedula (strain ATCC 51363 / DSM 5348 / JCM 9185 / NBRC 15509 / TH2).